A 246-amino-acid chain; its full sequence is Isoprenyl transferase (246 aa).

The active site involves aspartate 18. Aspartate 18 lines the Mg(2+) pocket. Residues 19–22 (GNGR), tryptophan 23, arginine 31, histidine 35, and 63–65 (SAE) each bind substrate. Asparagine 66 acts as the Proton acceptor in catalysis. Residues tryptophan 67, arginine 69, arginine 186, and 192–194 (RIS) each bind substrate. Glutamate 205 contacts Mg(2+).

The protein belongs to the UPP synthase family. In terms of assembly, homodimer. The cofactor is Mg(2+).

In terms of biological role, catalyzes the condensation of isopentenyl diphosphate (IPP) with allylic pyrophosphates generating different type of terpenoids. In Geobacter sulfurreducens (strain ATCC 51573 / DSM 12127 / PCA), this protein is Isoprenyl transferase.